Reading from the N-terminus, the 662-residue chain is UvrABC system protein B (662 aa).

The region spanning 31–188 (DNIEGGEKAQ…NDLVDIQFER (158 aa)) is the Helicase ATP-binding domain. 44–51 (GATGTGKT) is an ATP binding site. Positions 97–120 (YYDYYQPEAYVPSSDTYIEKDSSV) match the Beta-hairpin motif. The Helicase C-terminal domain maps to 435-601 (QIDDLLGEIN…TIKKEIRDLI (167 aa)). The 36-residue stretch at 626 to 661 (KDMIKKLEGQMQEAAGLLDFELAAQIRDMILEIKAM) folds into the UVR domain.

The protein belongs to the UvrB family. As to quaternary structure, forms a heterotetramer with UvrA during the search for lesions. Interacts with UvrC in an incision complex.

The protein localises to the cytoplasm. Its function is as follows. The UvrABC repair system catalyzes the recognition and processing of DNA lesions. A damage recognition complex composed of 2 UvrA and 2 UvrB subunits scans DNA for abnormalities. Upon binding of the UvrA(2)B(2) complex to a putative damaged site, the DNA wraps around one UvrB monomer. DNA wrap is dependent on ATP binding by UvrB and probably causes local melting of the DNA helix, facilitating insertion of UvrB beta-hairpin between the DNA strands. Then UvrB probes one DNA strand for the presence of a lesion. If a lesion is found the UvrA subunits dissociate and the UvrB-DNA preincision complex is formed. This complex is subsequently bound by UvrC and the second UvrB is released. If no lesion is found, the DNA wraps around the other UvrB subunit that will check the other stand for damage. The sequence is that of UvrABC system protein B from Streptococcus sanguinis (strain SK36).